Reading from the N-terminus, the 890-residue chain is Translation initiation factor IF-2 (890 aa).

Residues 45 to 302 (LIDHLNQKNS…SSLQQGFQKP (258 aa)) are disordered. Over residues 67-81 (STLNIPSTGGKSKSV) the composition is skewed to polar residues. Residues 92–217 (VKRDPQEAER…RMAEENKWTD (126 aa)) are compositionally biased toward basic and acidic residues. Basic residues predominate over residues 252–266 (GRGRNAKAARPKKGN). Residues 267–280 (KHAESKADREEARA) are compositionally biased toward basic and acidic residues. The tr-type G domain occupies 389-558 (PRAPVVTIMG…LLQAEVLELK (170 aa)). The tract at residues 398–405 (GHVDHGKT) is G1. 398–405 (GHVDHGKT) serves as a coordination point for GTP. Residues 423 to 427 (GITQH) form a G2 region. Residues 444–447 (DTPG) form a G3 region. GTP-binding positions include 444-448 (DTPGH) and 498-501 (NKID). Residues 498 to 501 (NKID) form a G4 region. Residues 534 to 536 (SAK) are G5. At K808 the chain carries N6-acetyllysine.

Belongs to the TRAFAC class translation factor GTPase superfamily. Classic translation factor GTPase family. IF-2 subfamily.

The protein resides in the cytoplasm. Its function is as follows. One of the essential components for the initiation of protein synthesis. Protects formylmethionyl-tRNA from spontaneous hydrolysis and promotes its binding to the 30S ribosomal subunits. Also involved in the hydrolysis of GTP during the formation of the 70S ribosomal complex. This chain is Translation initiation factor IF-2, found in Shigella dysenteriae serotype 1 (strain Sd197).